The following is a 109-amino-acid chain: U4-lycotoxin-Ls1a (109 aa).

The first 22 residues, 1-22 (MKVLVLFSVLFLTLFSYSSTEA), serve as a signal peptide directing secretion. Positions 23-44 (IDELDSDAEEDMLSLMANEQVR) are excised as a propeptide. Residues 45-88 (AKACTPRLHDCSHDRHSCCRGELFKDVCYCFYPEGEDKTEVCSC) are knottin domain. Cystine bridges form between C48-C63, C55-C72, C62-C88, and C74-C86. The segment at 89–108 (QQPKSHKYIEKVVDKAKTVV) is linear cationic cytotoxin domain.

This sequence belongs to the neurotoxin 19 (CSTX) family. 05 (U4-Lctx) subfamily. In terms of tissue distribution, expressed by the venom gland.

It is found in the secreted. Its function is as follows. Enhances the high-affinity desensitization of human P2RX3 purinoceptors. This is U4-lycotoxin-Ls1a from Lycosa singoriensis (Wolf spider).